The following is a 233-amino-acid chain: Ribose-5-phosphate isomerase A (233 aa).

Residues 31-34 (SGST), 87-90 (DGAD), and 100-103 (KGGG) contribute to the substrate site. The active-site Proton acceptor is E109. K127 serves as a coordination point for substrate.

It belongs to the ribose 5-phosphate isomerase family. In terms of assembly, homodimer.

It carries out the reaction aldehydo-D-ribose 5-phosphate = D-ribulose 5-phosphate. Its pathway is carbohydrate degradation; pentose phosphate pathway; D-ribose 5-phosphate from D-ribulose 5-phosphate (non-oxidative stage): step 1/1. Catalyzes the reversible conversion of ribose-5-phosphate to ribulose 5-phosphate. The sequence is that of Ribose-5-phosphate isomerase A from Chlamydia felis (strain Fe/C-56) (Chlamydophila felis).